We begin with the raw amino-acid sequence, 82 residues long: Penaeidin-3f (82 aa).

A signal peptide spans 1–19; sequence MRLVACLVFLASFALVCQG. Position 20 is a pyrrolidone carboxylic acid (Gln20). Intrachain disulfides connect Cys51/Cys66, Cys55/Cys73, and Cys67/Cys74. Position 81 is a serine amide (Ser81).

The protein belongs to the penaeidin family.

It is found in the cytoplasmic granule. Its function is as follows. Antibacterial and antifungal activity. Presents chitin-binding activity. The polypeptide is Penaeidin-3f (Penaeus vannamei (Whiteleg shrimp)).